The primary structure comprises 762 residues: N,N-dimethylformamidase beta subunit (762 aa).

As to quaternary structure, heterotetramer of two DmfA1 (alpha) and two DmfA2 (beta) subunits.

The enzyme catalyses N,N-dimethylformamide + H2O = dimethylamine + formate. Its activity is regulated as follows. Activity is slightly inhibited by Mg(2+) and Mn(2+), and slightly increased by Cu(2+). Activity is slightly inhibited by the chelating agents 8-hydroxyquinoline, ethylenediaminetetraacetate, o-phenanthroline and 2,2'-bipyridyl. Functionally, hydrolyzes N,N-dimethylformamide, and to a lesser extent N,N-dimethylacetamide and N,N-diethylacetamide. Has no activity against the substituted amides N-methylformamide, N-ethylformamide, N-ethylformamide and N-methylacetamide or the unsubstituted amides formamide, nicotinamide, acetoamide, benzamide, acetamide and acrylamide. The protein is N,N-dimethylformamidase beta subunit of Alcaligenes sp.